We begin with the raw amino-acid sequence, 475 residues long: Squamosa promoter-binding-like protein 12 (475 aa).

Positions 49–73 (NHGSTNSSGGTFTSSSELANGSSKS) are disordered. The span at 51-73 (GSTNSSGGTFTSSSELANGSSKS) shows a compositional bias: low complexity. The SBP-type zinc finger occupies 177–254 (SSYCQVEGCK…SDHNARRRKP (78 aa)). Zn(2+) contacts are provided by cysteine 180, cysteine 185, cysteine 202, histidine 205, cysteine 221, cysteine 224, histidine 228, and cysteine 240. The short motif at 237 to 253 (KKSCRRRLSDHNARRRK) is the Bipartite nuclear localization signal element. A disordered region spans residues 437–475 (GGGGFWQDGDDPPPLDHASQAQAFMHPGNGSSSGYGHLH). A compositionally biased stretch (polar residues) spans 465 to 475 (NGSSSGYGHLH).

As to expression, expressed in young panicles.

Its subcellular location is the nucleus. Functionally, trans-acting factor that binds specifically to the consensus nucleotide sequence 5'-TNCGTACAA-3'. May be involved in panicle development. The chain is Squamosa promoter-binding-like protein 12 (SPL12) from Oryza sativa subsp. indica (Rice).